Here is a 173-residue protein sequence, read N- to C-terminus: Probable xanthine dehydrogenase subunit E (173 aa).

The 77-residue stretch at Glu-14–Leu-90 folds into the 2Fe-2S ferredoxin-type domain. [2Fe-2S] cluster-binding residues include Cys-52, Cys-57, Cys-60, Cys-72, Cys-110, Cys-113, Cys-145, and Cys-147.

As to quaternary structure, could be composed of four subunits: PucA, PucC, PucD and PucE. [2Fe-2S] cluster is required as a cofactor.

The catalysed reaction is xanthine + NAD(+) + H2O = urate + NADH + H(+). The enzyme catalyses hypoxanthine + NAD(+) + H2O = xanthine + NADH + H(+). Its pathway is purine metabolism; hypoxanthine degradation; urate from hypoxanthine: step 1/2. It functions in the pathway purine metabolism; hypoxanthine degradation; urate from hypoxanthine: step 2/2. In terms of biological role, oxidizes hypoxanthine and xanthine to uric acid. This Bacillus subtilis (strain 168) protein is Probable xanthine dehydrogenase subunit E (pucE).